A 1365-amino-acid chain; its full sequence is Killer toxin-resistance protein 5 (1365 aa).

Positions 1–17 (MRLLALVLLLLCAPLRA) are cleaved as a signal peptide. Asn115, Asn228, Asn293, Asn457, Asn519, Asn523, Asn644, Asn870, Asn1091, Asn1150, and Asn1195 each carry an N-linked (GlcNAc...) asparagine glycan. The tract at residues 1334-1365 (FASSPGDEDVPGESVSSKYQDSDNAAPLHDEL) is disordered. Polar residues predominate over residues 1347-1356 (SVSSKYQDSD). The Prevents secretion from ER motif lies at 1362–1365 (HDEL).

To D.melanogaster UGGG.

Its subcellular location is the endoplasmic reticulum lumen. Functionally, required for (1-&gt;6)-beta-D-glucan synthesis and normal cell growth. This Saccharomyces cerevisiae (strain ATCC 204508 / S288c) (Baker's yeast) protein is Killer toxin-resistance protein 5 (KRE5).